The following is a 201-amino-acid chain: MKLLAINGSPNKRNTLFLLEVIAEEVKKLGHEAEIIHLKDYEIKECKGCDACLKGDCSQKDDIYKVLEKMQEADAIVIGTPTYFGNVTGIVKNLIDRSRMARMGNYRLRNRVFAPVVTSGLRNGGAEYAAMSLIVYALGQAMLPVSIVENPITTGTFPVGVIQGDAGWRSVKKDEIAINSAKALAKRIVEVAEATKNLRES.

4 residues coordinate [4Fe-4S] cluster: Cys-46, Cys-49, Cys-52, and Cys-57.

This sequence belongs to the SsuE family. Isf subfamily. Homodimer. Requires FMN as cofactor. [4Fe-4S] cluster is required as a cofactor.

Functionally, redox-active protein probably involved in electron transport. The chain is Iron-sulfur flavoprotein AF_1896 from Archaeoglobus fulgidus (strain ATCC 49558 / DSM 4304 / JCM 9628 / NBRC 100126 / VC-16).